Here is a 508-residue protein sequence, read N- to C-terminus: p-aminobenzoyl-glutamate transport protein (508 aa).

Transmembrane regions (helical) follow at residues 30–50 (FLLFIYLIIVLMVTTAILSAF), 85–105 (FSGFAPLGAILALVLGAGLAE), 121–139 (VNARYASYMVLFIAFFSHI), 140–159 (SSDAALVIMPPMGALIFLAV), 164–184 (VAGLLAAIAGVGCGFTANLLI), 211–231 (IDNWYFMASSVVVLTIVGGLI), 261–281 (GLRIAGVVSLLFIAAIALMVI), 303–323 (GIVPLIILFFFVVSLAYGIAT), 343–363 (MAGFIVMVFPLAQFVAMFNWS), 382–402 (LSGIPAFVGLALLSSFLCMFI), 405–425 (GSAIWSILAPIFVPMFMLLGF), 439–459 (SSVLPLAPVSPFVPLFLGFLQ), and 479–499 (LIFLVVWLLMLLAWYLVGLPI).

It localises to the cell inner membrane. It catalyses the reaction N-(4-aminobenzoyl)-L-glutamate(in) + H(+)(in) = N-(4-aminobenzoyl)-L-glutamate(out) + H(+)(out). Completely inhibited by 100 nM sodium azide and by the proton ionophore carbonyl cyanide m-chlorophenylhydrazone (CCCP). Is also strongly inhibited by 100 mM potassium fluoride. Its function is as follows. Essential for aminobenzoyl-glutamate utilization. It catalyzes the concentration-dependent uptake of p-aminobenzoyl-glutamate (PABA-GLU) into the cell and allows accumulation of PABA-GLU to a concentration enabling AbgAB to catalyze cleavage into p-aminobenzoate and glutamate. It also seems to increase the sensitivity to low levels of aminobenzoyl-glutamate. May actually serve physiologically as a transporter for some other molecule, perhaps a dipeptide, and that it transports p-aminobenzoyl-glutamate as a secondary activity. The physiological role of abgABT should be clarified. The protein is p-aminobenzoyl-glutamate transport protein of Escherichia coli (strain K12).